We begin with the raw amino-acid sequence, 285 residues long: Release factor glutamine methyltransferase (285 aa).

S-adenosyl-L-methionine contacts are provided by residues 119 to 123, Glu142, Trp175, and Asn191; that span reads GTGSG. 191–194 provides a ligand contact to substrate; sequence NPPY.

The protein belongs to the protein N5-glutamine methyltransferase family. PrmC subfamily.

It carries out the reaction L-glutaminyl-[peptide chain release factor] + S-adenosyl-L-methionine = N(5)-methyl-L-glutaminyl-[peptide chain release factor] + S-adenosyl-L-homocysteine + H(+). Methylates the class 1 translation termination release factors RF1/PrfA and RF2/PrfB on the glutamine residue of the universally conserved GGQ motif. The sequence is that of Release factor glutamine methyltransferase from Burkholderia pseudomallei (strain K96243).